Here is a 287-residue protein sequence, read N- to C-terminus: Urease accessory protein UreD (287 aa).

It belongs to the UreD family. UreD, UreF and UreG form a complex that acts as a GTP-hydrolysis-dependent molecular chaperone, activating the urease apoprotein by helping to assemble the nickel containing metallocenter of UreC. The UreE protein probably delivers the nickel.

The protein localises to the cytoplasm. Functionally, required for maturation of urease via the functional incorporation of the urease nickel metallocenter. This is Urease accessory protein UreD from Aliivibrio fischeri (strain ATCC 700601 / ES114) (Vibrio fischeri).